Here is a 758-residue protein sequence, read N- to C-terminus: 5-methyltetrahydropteroyltriglutamate--homocysteine methyltransferase (758 aa).

5-methyltetrahydropteroyltri-L-glutamate-binding positions include 16–19 and K117; that span reads RELK. L-homocysteine contacts are provided by residues 436–438 and E489; that span reads IGS. L-methionine is bound by residues 436-438 and E489; that span reads IGS. Residues 520–521 and W566 each bind 5-methyltetrahydropteroyltri-L-glutamate; that span reads RC. D604 lines the L-homocysteine pocket. D604 is an L-methionine binding site. Position 610 (E610) interacts with 5-methyltetrahydropteroyltri-L-glutamate. Zn(2+)-binding residues include H646, C648, and E670. H699 (proton donor) is an active-site residue. C731 is a Zn(2+) binding site.

This sequence belongs to the vitamin-B12 independent methionine synthase family. The cofactor is Zn(2+).

The enzyme catalyses 5-methyltetrahydropteroyltri-L-glutamate + L-homocysteine = tetrahydropteroyltri-L-glutamate + L-methionine. Its pathway is amino-acid biosynthesis; L-methionine biosynthesis via de novo pathway; L-methionine from L-homocysteine (MetE route): step 1/1. Functionally, catalyzes the transfer of a methyl group from 5-methyltetrahydrofolate to homocysteine resulting in methionine formation. The polypeptide is 5-methyltetrahydropteroyltriglutamate--homocysteine methyltransferase (Ruthia magnifica subsp. Calyptogena magnifica).